We begin with the raw amino-acid sequence, 158 residues long: NAD(P)H-quinone oxidoreductase subunit J, chloroplastic (158 aa).

The protein belongs to the complex I 30 kDa subunit family. NDH is composed of at least 16 different subunits, 5 of which are encoded in the nucleus.

It localises to the plastid. It is found in the chloroplast thylakoid membrane. It catalyses the reaction a plastoquinone + NADH + (n+1) H(+)(in) = a plastoquinol + NAD(+) + n H(+)(out). The enzyme catalyses a plastoquinone + NADPH + (n+1) H(+)(in) = a plastoquinol + NADP(+) + n H(+)(out). Its function is as follows. NDH shuttles electrons from NAD(P)H:plastoquinone, via FMN and iron-sulfur (Fe-S) centers, to quinones in the photosynthetic chain and possibly in a chloroplast respiratory chain. The immediate electron acceptor for the enzyme in this species is believed to be plastoquinone. Couples the redox reaction to proton translocation, and thus conserves the redox energy in a proton gradient. In Oenothera argillicola (Appalachian evening primrose), this protein is NAD(P)H-quinone oxidoreductase subunit J, chloroplastic.